A 553-amino-acid polypeptide reads, in one-letter code: Cytokine-like nuclear factor N-PAC (553 aa).

The region spanning 8–66 is the PWWP domain; sequence LGDLVWGKLGRYPPWPGKIVNPPKDLKKPRGKKCFFVKFFGTEDHAWIKVEQLKPYHAH. Basic and acidic residues-rich tracts occupy residues 92-145 and 162-182; these read RAKG…EGKK and RAQE…KDLT. The disordered stretch occupies residues 92–188; the sequence is RAKGKDQTSS…KDLTIPESST (97 aa). At Ser-130 the chain carries Phosphoserine. Lys-135 is covalently cross-linked (Glycyl lysine isopeptide (Lys-Gly) (interchain with G-Cter in SUMO2)). Phosphoserine is present on Ser-167. A DNA-binding region (a.T hook) is located at residues 168-180; that stretch reads PRKRGRPPKDEKD. Residues Lys-176, Lys-179, Lys-201, and Lys-211 each participate in a glycyl lysine isopeptide (Lys-Gly) (interchain with G-Cter in SUMO2) cross-link. Positions 214–217 are interaction with histone H3; that stretch reads DPHF. Positions 216–225 are interaction with KDM1B; sequence HFHHFLLSQT. Residues Lys-227, Lys-237, Lys-240, and Lys-269 each participate in a glycyl lysine isopeptide (Lys-Gly) (interchain with G-Cter in SUMO2) cross-link. Residues 261 to 553 form a dehydrogenase domain region; it reads GSITPTDKKI…MSAVYRAYIH (293 aa). 271–285 is a binding site for NAD(+); it reads GFLGLGLMGSGIVSN. Residue Lys-302 forms a Glycyl lysine isopeptide (Lys-Gly) (interchain with G-Cter in SUMO2) linkage. The NAD(+) site is built by Thr-362 and Lys-505. Ser-540 carries the phosphoserine modification.

Belongs to the HIBADH-related family. NP60 subfamily. In terms of assembly, homotetramere. Interacts with MAPK14. Interacts with KDM1B at nucleosomes; this interaction stimulates H3K4me1 and H3K4me2 demethylation. Binds to mononucleosomes. Interacts with GATA4; the interaction is required for a synergistic activation of GATA4 target genes transcription.

The protein localises to the nucleus. It localises to the chromosome. Its function is as follows. Cytokine-like nuclear factor with chromatin gene reader activity involved in chromatin modification and regulation of gene expression. Acts as a nucleosome-destabilizing factor that is recruited to genes during transcriptional activation. Recognizes and binds histone H3 without a preference for specific epigenetic markers and also binds DNA. Interacts with KDM1B and promotes its histone demethylase activity by facilitating the capture of H3 tails, they form a multifunctional enzyme complex that modifies transcribed chromatin and facilitates Pol II transcription through nucleosomes. Stimulates the acetylation of 'Lys-56' of nucleosomal histone H3 (H3K56ac) by EP300. With GATA4, co-binds a defined set of heart development genes and coregulates their expression during cardiomyocyte differentiation. Regulates p38 MAP kinase activity by mediating stress activation of MAPK14/p38alpha and specifically regulating MAPK14 signaling. Indirectly promotes phosphorylation of MAPK14 and activation of ATF2. The phosphorylation of MAPK14 requires upstream activity of MAP2K4 and MAP2K6. This Homo sapiens (Human) protein is Cytokine-like nuclear factor N-PAC.